Reading from the N-terminus, the 219-residue chain is Holliday junction branch migration complex subunit RuvA (219 aa).

The domain I stretch occupies residues 1 to 66 (MIEYIIGKIS…NFLFEYYGFK (66 aa)). Residues 67–148 (TLREKIFFEN…SEYNNDVNHS (82 aa)) form a domain II region. Residues 149–154 (SINQQS) are flexible linker. Residues 155-219 (NSYNPVPDLV…EAVTNKTTVS (65 aa)) form a domain III region.

The protein belongs to the RuvA family. In terms of assembly, homotetramer. Forms an RuvA(8)-RuvB(12)-Holliday junction (HJ) complex. HJ DNA is sandwiched between 2 RuvA tetramers; dsDNA enters through RuvA and exits via RuvB. An RuvB hexamer assembles on each DNA strand where it exits the tetramer. Each RuvB hexamer is contacted by two RuvA subunits (via domain III) on 2 adjacent RuvB subunits; this complex drives branch migration. In the full resolvosome a probable DNA-RuvA(4)-RuvB(12)-RuvC(2) complex forms which resolves the HJ.

It is found in the cytoplasm. In terms of biological role, the RuvA-RuvB-RuvC complex processes Holliday junction (HJ) DNA during genetic recombination and DNA repair, while the RuvA-RuvB complex plays an important role in the rescue of blocked DNA replication forks via replication fork reversal (RFR). RuvA specifically binds to HJ cruciform DNA, conferring on it an open structure. The RuvB hexamer acts as an ATP-dependent pump, pulling dsDNA into and through the RuvAB complex. HJ branch migration allows RuvC to scan DNA until it finds its consensus sequence, where it cleaves and resolves the cruciform DNA. This is Holliday junction branch migration complex subunit RuvA from Malacoplasma penetrans (strain HF-2) (Mycoplasma penetrans).